The chain runs to 289 residues: Nucleotide-binding protein MS1718 (289 aa).

8-15 (GRSGAGKS) is a binding site for ATP. 56–59 (DIRN) is a GTP binding site.

It belongs to the RapZ-like family.

Displays ATPase and GTPase activities. The polypeptide is Nucleotide-binding protein MS1718 (Mannheimia succiniciproducens (strain KCTC 0769BP / MBEL55E)).